The chain runs to 153 residues: Transcriptional repressor NrdR (153 aa).

The segment at 3-34 (CPFCGYEDSKVVDTRPTNEGKTIKRRRECLKC) is a zinc-finger region. The ATP-cone domain occupies 49–139 (ILVIKKDNRR…VYRQFKDINT (91 aa)).

Belongs to the NrdR family. The cofactor is Zn(2+).

Negatively regulates transcription of bacterial ribonucleotide reductase nrd genes and operons by binding to NrdR-boxes. This is Transcriptional repressor NrdR from Caldicellulosiruptor bescii (strain ATCC BAA-1888 / DSM 6725 / KCTC 15123 / Z-1320) (Anaerocellum thermophilum).